The chain runs to 217 residues: Large ribosomal subunit protein uL3 (217 aa).

Residues 133–145 show a composition bias toward polar residues; sequence GRASHGNSRSHNV. The disordered stretch occupies residues 133–153; sequence GRASHGNSRSHNVPGSIGMAQ. Residue glutamine 153 is modified to N5-methylglutamine.

It belongs to the universal ribosomal protein uL3 family. As to quaternary structure, part of the 50S ribosomal subunit. Forms a cluster with proteins L14 and L19. Methylated by PrmB.

Its function is as follows. One of the primary rRNA binding proteins, it binds directly near the 3'-end of the 23S rRNA, where it nucleates assembly of the 50S subunit. The sequence is that of Large ribosomal subunit protein uL3 from Ralstonia pickettii (strain 12J).